Here is a 492-residue protein sequence, read N- to C-terminus: UDP-N-acetylmuramoyl-L-alanyl-D-glutamate--2,6-diaminopimelate ligase (492 aa).

Ser21 serves as a coordination point for UDP-N-acetyl-alpha-D-muramoyl-L-alanyl-D-glutamate. 98-104 provides a ligand contact to ATP; sequence GTNGKSS. UDP-N-acetyl-alpha-D-muramoyl-L-alanyl-D-glutamate is bound by residues 144–145, Ser171, Gln177, and Arg179; that span reads TT. An N6-carboxylysine modification is found at Lys211. Residues Arg372, 396-399, Gly446, and Glu450 each bind meso-2,6-diaminopimelate; that span reads DNPR. The Meso-diaminopimelate recognition motif motif lies at 396-399; sequence DNPR.

Belongs to the MurCDEF family. MurE subfamily. Mg(2+) is required as a cofactor. Carboxylation is probably crucial for Mg(2+) binding and, consequently, for the gamma-phosphate positioning of ATP.

The protein resides in the cytoplasm. The enzyme catalyses UDP-N-acetyl-alpha-D-muramoyl-L-alanyl-D-glutamate + meso-2,6-diaminopimelate + ATP = UDP-N-acetyl-alpha-D-muramoyl-L-alanyl-gamma-D-glutamyl-meso-2,6-diaminopimelate + ADP + phosphate + H(+). It functions in the pathway cell wall biogenesis; peptidoglycan biosynthesis. Its function is as follows. Catalyzes the addition of meso-diaminopimelic acid to the nucleotide precursor UDP-N-acetylmuramoyl-L-alanyl-D-glutamate (UMAG) in the biosynthesis of bacterial cell-wall peptidoglycan. The chain is UDP-N-acetylmuramoyl-L-alanyl-D-glutamate--2,6-diaminopimelate ligase from Rickettsia typhi (strain ATCC VR-144 / Wilmington).